A 40-amino-acid polypeptide reads, in one-letter code: Photosystem II reaction center protein Y (40 aa).

Residues 5–23 (LVLVASPILLALGWAGFNI) form a helical membrane-spanning segment.

The protein belongs to the PsbY family. PSII is composed of 1 copy each of membrane proteins PsbA, PsbB, PsbC, PsbD, PsbE, PsbF, PsbH, PsbI, PsbJ, PsbK, PsbL, PsbM, PsbT, PsbX, PsbY, PsbZ, Psb30/Ycf12, peripheral proteins PsbO, CyanoQ (PsbQ), PsbU, PsbV and a large number of cofactors. It forms dimeric complexes.

The protein resides in the cellular thylakoid membrane. Loosely associated component of the core of photosystem II (PSII), it is not always seen in crystals. PSII is a light-driven water plastoquinone oxidoreductase, using light energy to abstract electrons from H(2)O, generating a proton gradient subsequently used for ATP formation. The protein is Photosystem II reaction center protein Y of Synechococcus sp. (strain WH7803).